A 483-amino-acid polypeptide reads, in one-letter code: Rhamnulokinase (483 aa).

Residue A11–R15 participates in ATP binding. Substrate contacts are provided by residues G79 and H234 to T236. Residue D235 is the Proton acceptor of the active site. T257 is a binding site for ATP. N294 provides a ligand contact to substrate. Q302 serves as a coordination point for ATP. C352 and C369 are disulfide-bonded. Residue G401 coordinates ATP.

It belongs to the rhamnulokinase family. Requires Mg(2+) as cofactor.

It carries out the reaction L-rhamnulose + ATP = L-rhamnulose 1-phosphate + ADP + H(+). It participates in carbohydrate degradation; L-rhamnose degradation; glycerone phosphate from L-rhamnose: step 2/3. In terms of biological role, involved in the catabolism of L-rhamnose (6-deoxy-L-mannose). Catalyzes the transfer of the gamma-phosphate group from ATP to the 1-hydroxyl group of L-rhamnulose to yield L-rhamnulose 1-phosphate. The protein is Rhamnulokinase of Listeria monocytogenes serotype 4b (strain F2365).